The sequence spans 470 residues: Flotillin-like protein 1 (470 aa).

A lipid anchor (S-palmitoyl cysteine) is attached at cysteine 35. The stretch at 305–354 (EYETKVQEANWELYNKQKQAEAVLYEKQKQAEAQKAQADAAFYSKQKEAE) forms a coiled coil.

Belongs to the band 7/mec-2 family. Flotillin subfamily. Post-translationally, may be palmitoylated.

The protein localises to the cell membrane. The protein resides in the membrane. It is found in the caveola. Its function is as follows. May act as a scaffolding protein within caveolar membranes, functionally participating in formation of caveolae or caveolae-like vesicles. This chain is Flotillin-like protein 1 (FLOT1), found in Arabidopsis thaliana (Mouse-ear cress).